The chain runs to 158 residues: Transcriptional repressor NrdR (158 aa).

A zinc finger lies at 3-34 (CPYCGYPDSRVIDSRPTDDNTAIRRRRECLKC). The region spanning 49 to 139 (ILVIKKDNRR…VYRQFKDINT (91 aa)) is the ATP-cone domain.

This sequence belongs to the NrdR family. It depends on Zn(2+) as a cofactor.

Functionally, negatively regulates transcription of bacterial ribonucleotide reductase nrd genes and operons by binding to NrdR-boxes. The sequence is that of Transcriptional repressor NrdR from Caldanaerobacter subterraneus subsp. tengcongensis (strain DSM 15242 / JCM 11007 / NBRC 100824 / MB4) (Thermoanaerobacter tengcongensis).